The primary structure comprises 340 residues: Entry-fusion complex protein OPG094 (340 aa).

The interval 1 to 20 (MGGGVSVELPKRDPPPGVPT) is disordered. The N-myristoyl glycine; by host moiety is linked to residue Gly-2. Residues 2-319 (GGGVSVELPK…VQHNIKHSFD (318 aa)) lie on the Virion surface side of the membrane. The chain crosses the membrane as a helical; Signal-anchor for type II membrane protein span at residues 320 to 340 (LKLHLISLLSLLVIWILIVAI).

It belongs to the orthopoxvirus OPG086 family. As to quaternary structure, interacts with OPG143. Component of the entry fusion complex (EFC) composed of OPG053, OPG076, OPG086, OPG094, OPG095, OPG099, OPG107, OPG143, OPG104, OPG147 and OPG155. Except for OPG095 and OPG053, each of the EFC proteins is required for assembly or stability of the complex. Unglycosylated because produced in viral factories instead of the classic ER -Golgi route.

Its subcellular location is the virion membrane. Component of the entry fusion complex (EFC), which consists of 11 proteins. During cell infection, this complex mediates entry of the virion core into the host cytoplasm by a two-step mechanism consisting of lipid mixing of the viral and cellular membranes and subsequent pore formation. This is Entry-fusion complex protein OPG094 (OPG094) from Variola virus.